The chain runs to 35 residues: Photosystem II reaction center protein Psb30 (35 aa).

Residues 7-27 (VFVQLALLALIVLAGPAVILL) form a helical membrane-spanning segment.

This sequence belongs to the Psb30/Ycf12 family. In terms of assembly, PSII is composed of 1 copy each of membrane proteins PsbA, PsbB, PsbC, PsbD, PsbE, PsbF, PsbH, PsbI, PsbJ, PsbK, PsbL, PsbM, PsbT, PsbX, PsbY, PsbZ, Psb30/Ycf12, peripheral proteins PsbO, CyanoQ (PsbQ), PsbU, PsbV and a large number of cofactors. It forms dimeric complexes.

The protein resides in the cellular thylakoid membrane. Functionally, a core subunit of photosystem II (PSII), probably helps stabilize the reaction center. The polypeptide is Photosystem II reaction center protein Psb30 (Synechococcus sp. (strain JA-2-3B'a(2-13)) (Cyanobacteria bacterium Yellowstone B-Prime)).